Consider the following 122-residue polypeptide: Large ribosomal subunit protein uL14 (122 aa).

It belongs to the universal ribosomal protein uL14 family. In terms of assembly, part of the 50S ribosomal subunit. Forms a cluster with proteins L3 and L19. In the 70S ribosome, L14 and L19 interact and together make contacts with the 16S rRNA in bridges B5 and B8.

Binds to 23S rRNA. Forms part of two intersubunit bridges in the 70S ribosome. The polypeptide is Large ribosomal subunit protein uL14 (Rickettsia canadensis (strain McKiel)).